The sequence spans 427 residues: BTB/POZ domain-containing protein KCTD16 (427 aa).

Positions 25–98 constitute a BTB domain; the sequence is EVIELNVGGQ…LRDRQVVLPD (74 aa). Position 112 is a phosphotyrosine (tyrosine 112). A phosphoserine mark is found at serine 130, serine 137, serine 143, and serine 146.

Homopentamer; forms an open pentamer. In contrast to other BTB domain-containing proteins, does not interact with CUL3. Interacts as a tetramer with GABBR1 and GABBR2. Expressed in the brain, mainly in the hippocampus.

It is found in the presynaptic cell membrane. The protein localises to the postsynaptic cell membrane. Auxiliary subunit of GABA-B receptors that determine the pharmacology and kinetics of the receptor response. Increases agonist potency and markedly alter the G-protein signaling of the receptors by accelerating onset and promoting desensitization. This chain is BTB/POZ domain-containing protein KCTD16 (Kctd16), found in Mus musculus (Mouse).